Here is a 132-residue protein sequence, read N- to C-terminus: Mercuric resistance operon regulatory protein (132 aa).

One can recognise an HTH merR-type domain in the interval 2-71 (KFRIGELADK…LNEIDKLLGV (70 aa)). Positions 5–24 (IGELADKCGVNKETIRYYER) form a DNA-binding region, H-T-H motif. Hg(2+)-binding residues include Cys79, Cys114, and Cys123.

In terms of assembly, homodimer.

Functionally, mediates the mercuric-dependent induction of mercury resistance operon. In the absence of mercury MerR represses transcription by binding tightly to the mer operator region; when mercury is present the dimeric complex binds a single ion and becomes a potent transcriptional activator, while remaining bound to the mer site. The polypeptide is Mercuric resistance operon regulatory protein (merR1) (Bacillus cereus).